The primary structure comprises 913 residues: Striatin-interacting protein homolog (913 aa).

Composition is skewed to low complexity over residues 177–188 (QQQQQQQQNENE), 195–204 (TNFTTTTTTT), and 791–811 (NNNN…NNDN). Disordered stretches follow at residues 177 to 204 (QQQQ…TTTT) and 791 to 814 (NNNN…NGLT).

This sequence belongs to the STRIP family.

The protein is Striatin-interacting protein homolog (fam40) of Dictyostelium discoideum (Social amoeba).